We begin with the raw amino-acid sequence, 706 residues long: MGRKVTVATCALNQWALDFEGNLQRILKSIEIAKHRGARYRLGPELEICGYGCWDHYYESDTLLHSLQVLAALLESPVTQDIICDVGMPVMHRNVRYNCRVIFLNRKILLIRPKMALANEGNYRELRWFTPWSRSRQTEEYFLPRMLQDLTKQETVPFGDAVLSTWDTCIGSEVCEELWTPHSPHVDMGLDGVEIFTNASGSHHVLRKAHARVDLVTMATTKNGGIYLLANQKGCDGDRLYYDGCALIAMNGSIFAQGSQFSLDDVEVLTATLDLEDIRSYRAEISSRNLAASRVSPYPRVKVDFALSCHEDLLEPVSEPIEWKYHSPAEEISLGPACWLWDFLRRSRQAGFFLPLSGGVDSAATACLVYSMCHQVCEAVKRGNLEVLADVRTIVNQLSYTPQDPRELCGRVLTTCYMASENSSQETCDRARELAQQIGSHHIGLHIDPVVKALVGLFSLVTGASPRFAVHGGSDRENLALQNVQARVRMVIAYLFAQLSLWSRGAPGGLLVLGSANVDESLLGYLTKYDCSSADINPIGGISKTDLRAFVQLCVERFQLPALQSILAAPATAELEPLAHGRVSQTDEEDMGMTYAELSVYGRLRKVAKTGPYSMFCKLLDMWRDTCSPRQVADKVKCFFSKYSMNRHKMTTLTPAYHAESYSPDDNRFDLRPFLYNTRWPWQFRCIENQVLQLEGRQRQELDGVD.

The CN hydrolase domain maps to Val5–Leu275. Residue Glu45 is the Proton acceptor; for glutaminase activity of the active site. Lys114 (for glutaminase activity) is an active-site residue. Catalysis depends on Cys175, which acts as the Nucleophile; for glutaminase activity. The interval Tyr325–Asp706 is ligase. Pro355–Ser362 is a binding site for ATP. Ser357 is an active-site residue.

In the C-terminal section; belongs to the NAD synthetase family. Homohexamer.

The catalysed reaction is deamido-NAD(+) + L-glutamine + ATP + H2O = L-glutamate + AMP + diphosphate + NAD(+) + H(+). The protein operates within cofactor biosynthesis; NAD(+) biosynthesis; NAD(+) from deamido-NAD(+) (L-Gln route): step 1/1. Functionally, catalyzes the ATP-dependent amidation of deamido-NAD to form NAD. Uses L-glutamine as a nitrogen source. This is Glutamine-dependent NAD(+) synthetase (NADSYN1) from Bos taurus (Bovine).